The primary structure comprises 417 residues: Methyltransferase/ribosomally synthesized cyclic peptide omphalotin A precursor ophMA (417 aa).

The methyltransferase domain stretch occupies residues 1–251 (METSTQTKAG…GVSTFYIPPK (251 aa)). Catalysis depends on residues Arg-72, Tyr-76, and Tyr-98. S-adenosyl-L-methionine contacts are provided by Tyr-98, His-100, Val-103, Ala-130, Gln-172, Ala-213, Ser-244, and Thr-245. The tract at residues 252–378 (ARKASNLDII…WAIRCAMKNM (127 aa)) is clasp domain. A precursor leader region spans residues 379-399 (PSSLLDAARESGEEASQNGFP). Residues Val-401, Val-403, and Val-404 each carry the N-methylvaline modification. Gly-405 carries the N-methylglycine modification. At Val-406 the chain carries N-methylvaline. An N-methylisoleucine modification is found at Ile-407. Gly-408 bears the N-methylglycine mark. Ile-410 carries the post-translational modification N-methylisoleucine. The residue at position 411 (Gly-411) is an N-methylglycine. Val-413 carries the post-translational modification N-methylvaline.

In the N-terminal section; belongs to the precorrin methyltransferase family. In terms of assembly, homodimer. OphMA automethylates at Val-401, Val-403, Val-404, Gly-405, Val-406, Ile-407, Gly-408, Ile-410, Gly-411 and Val-413 before being processed by the prolyloligopeptidase ophP which likely forms a peptidyl ester upon removal of the follower propeptide, which then undergoes macrocyclization with the N-terminus of the modified core peptide. Peptide backbone alpha-N-methylations change the physicochemical properties of amide bonds to provide structural constraints and other favorable characteristics including biological membrane permeability to peptides.

Its pathway is mycotoxin biosynthesis. Its function is as follows. Fusion protein of the methyltransferase ophM and the omphalotin core peptide; part of the gene cluster that mediates the biosynthesis of omphalotin A, a highly methylated cyclic dodecapeptide with nematodicidal activity. Omphalotin A derives from the C-terminus of the ophMA protein, and it is the ophMA protein that methylates its own C-terminus using S-adenosyl methionine (SAM). The C-terminus is subsequently cleaved off and macrocyclized by the prolyloligopeptidase ophP to give the final product. The chain is Methyltransferase/ribosomally synthesized cyclic peptide omphalotin A precursor ophMA from Omphalotus olearius (Jack o'lantern).